The sequence spans 157 residues: Large ribosomal subunit protein eL24 (157 aa).

A disordered region spans residues 94-157 (RNQKPEVRKA…ISAPRVGGKR (64 aa)). Residues 96 to 117 (QKPEVRKAQREQAIRAAKEAKK) are compositionally biased toward basic and acidic residues. Residues 123 to 140 (KKPAAPSAKASTKTAQKP) are compositionally biased toward low complexity.

It belongs to the eukaryotic ribosomal protein eL24 family. In terms of assembly, component of the large ribosomal subunit.

It is found in the cytoplasm. Functionally, component of the large ribosomal subunit. The ribosome is a large ribonucleoprotein complex responsible for the synthesis of proteins in the cell. This is Large ribosomal subunit protein eL24 (rpl24) from Pagrus major (Red sea bream).